We begin with the raw amino-acid sequence, 302 residues long: Sulfate adenylyltransferase subunit 2 (302 aa).

The protein belongs to the PAPS reductase family. CysD subfamily. In terms of assembly, heterodimer composed of CysD, the smaller subunit, and CysN.

It carries out the reaction sulfate + ATP + H(+) = adenosine 5'-phosphosulfate + diphosphate. It participates in sulfur metabolism; hydrogen sulfide biosynthesis; sulfite from sulfate: step 1/3. Its function is as follows. With CysN forms the ATP sulfurylase (ATPS) that catalyzes the adenylation of sulfate producing adenosine 5'-phosphosulfate (APS) and diphosphate, the first enzymatic step in sulfur assimilation pathway. APS synthesis involves the formation of a high-energy phosphoric-sulfuric acid anhydride bond driven by GTP hydrolysis by CysN coupled to ATP hydrolysis by CysD. This chain is Sulfate adenylyltransferase subunit 2, found in Proteus mirabilis (strain HI4320).